We begin with the raw amino-acid sequence, 1189 residues long: Pyruvate carboxylase (1189 aa).

The Biotin carboxylation domain occupies 21–473 (TMNKILVANR…WTTFIDDTPE (453 aa)). 3 residues coordinate ATP: K139, E223, and H258. One can recognise an ATP-grasp domain in the interval 143–340 (RNLAYAANVP…IVAAQIQIAA (198 aa)). The active site involves R315. A Pyruvate carboxyltransferase domain is found at 559-826 (LMIMDTTWRD…ETGIPEANAR (268 aa)). Substrate contacts are provided by residues 567–571 (RDAHQ) and R640. D568 serves as a coordination point for a divalent metal cation. Positions 736, 766, and 768 each coordinate a divalent metal cation. An N6-carboxylysine modification is found at K736. T900 provides a ligand contact to substrate. The Biotinyl-binding domain maps to 1099–1174 (KADAHNPNEI…DASDLIPKSS (76 aa)). Residue K1140 is modified to N6-biotinyllysine.

The cofactor is biotin. Zn(2+) serves as cofactor.

Its subcellular location is the cytoplasm. The catalysed reaction is hydrogencarbonate + pyruvate + ATP = oxaloacetate + ADP + phosphate + H(+). The protein operates within carbohydrate biosynthesis; gluconeogenesis. In terms of biological role, pyruvate carboxylase catalyzes a 2-step reaction, involving the ATP-dependent carboxylation of the covalently attached biotin in the first step and the transfer of the carboxyl group to pyruvate in the second. This is Pyruvate carboxylase (PYC1) from Komagataella pastoris (Yeast).